A 363-amino-acid chain; its full sequence is Adenosine 3'-phospho 5'-phosphosulfate transporter 2 (363 aa).

A run of 10 helical transmembrane segments spans residues 39–59, 63–83, 106–126, 131–151, 157–177, 187–206, 231–251, 257–277, 281–301, and 310–330; these read WLQF…YGYM, IFKL…QFVI, IYGV…ASVG, PTQV…GILI, GWID…FTLA, SRGY…IGNI, VFIF…PFFL, TFGY…VVLT, VFGA…TIIL, and FTIE…LNLY.

The protein belongs to the nucleotide-sugar transporter family. SLC35B subfamily.

Its subcellular location is the golgi apparatus membrane. Mediates the transport of adenosine 3'-phospho 5'-phosphosulfate (PAPS), from cytosol into Golgi. PAPS is a universal sulfuryl donor for sulfation events that take place in the Golgi. The protein is Adenosine 3'-phospho 5'-phosphosulfate transporter 2 (pst-2) of Caenorhabditis briggsae.